A 525-amino-acid chain; its full sequence is Probable protein kinase UbiB (525 aa).

The region spanning 118 to 500 is the Protein kinase domain; sequence DFERVPVASA…QKRTNRLLQG (383 aa). Residues 124–132 and Lys150 contribute to the ATP site; that span reads VASASIAQV. Catalysis depends on Asp285, which acts as the Proton acceptor. Residues 501–521 traverse the membrane as a helical segment; the sequence is LLLFGVAVGVGAALARVFLAL.

Belongs to the ABC1 family. UbiB subfamily.

It is found in the cell inner membrane. Its pathway is cofactor biosynthesis; ubiquinone biosynthesis [regulation]. Is probably a protein kinase regulator of UbiI activity which is involved in aerobic coenzyme Q (ubiquinone) biosynthesis. In Paraburkholderia xenovorans (strain LB400), this protein is Probable protein kinase UbiB.